The primary structure comprises 598 residues: Pescadillo homolog (598 aa).

The segment at 296 to 317 (QAMKADSKDKDDNSNDEAPENV) is disordered. A BRCT domain is found at 345–439 (PTATLFEDFV…ELLSANLYLP (95 aa)). Disordered regions lie at residues 452 to 501 (DALG…EDVE), 515 to 544 (GIAY…EDEE), and 564 to 598 (MKYS…VEKK). A compositionally biased stretch (acidic residues) spans 463 to 485 (ESEDESSDSSEESDSEIENEEED). Basic and acidic residues-rich tracts occupy residues 520-532 (KAKD…DVAS), 570-579 (QKEDKIEELK), and 586-598 (AKKE…VEKK). The stretch at 557-598 (QRKLYKKMKYSNQQKEDKIEELKKKKKQLAKKEKTLKKVEKK) forms a coiled coil.

The protein belongs to the pescadillo family. Component of the NOP7 complex, composed of ERB1, NOP7 and YTM1. The complex is held together by ERB1, which interacts with NOP7 via its N-terminal domain and with YTM1 via a high-affinity interaction between the seven-bladed beta-propeller domains of the 2 proteins. The NOP7 complex associates with the 66S pre-ribosome.

The protein localises to the nucleus. Its subcellular location is the nucleolus. The protein resides in the nucleoplasm. Its function is as follows. Component of the NOP7 complex, which is required for maturation of the 25S and 5.8S ribosomal RNAs and formation of the 60S ribosome. The polypeptide is Pescadillo homolog (Candida glabrata (strain ATCC 2001 / BCRC 20586 / JCM 3761 / NBRC 0622 / NRRL Y-65 / CBS 138) (Yeast)).